A 497-amino-acid chain; its full sequence is Aspartyl/glutamyl-tRNA(Asn/Gln) amidotransferase subunit B (497 aa).

Belongs to the GatB/GatE family. GatB subfamily. Heterotrimer of A, B and C subunits.

It catalyses the reaction L-glutamyl-tRNA(Gln) + L-glutamine + ATP + H2O = L-glutaminyl-tRNA(Gln) + L-glutamate + ADP + phosphate + H(+). The enzyme catalyses L-aspartyl-tRNA(Asn) + L-glutamine + ATP + H2O = L-asparaginyl-tRNA(Asn) + L-glutamate + ADP + phosphate + 2 H(+). Functionally, allows the formation of correctly charged Asn-tRNA(Asn) or Gln-tRNA(Gln) through the transamidation of misacylated Asp-tRNA(Asn) or Glu-tRNA(Gln) in organisms which lack either or both of asparaginyl-tRNA or glutaminyl-tRNA synthetases. The reaction takes place in the presence of glutamine and ATP through an activated phospho-Asp-tRNA(Asn) or phospho-Glu-tRNA(Gln). This is Aspartyl/glutamyl-tRNA(Asn/Gln) amidotransferase subunit B from Rhodopirellula baltica (strain DSM 10527 / NCIMB 13988 / SH1).